The sequence spans 458 residues: MYVPEEIIETIKMIEYQNLDIRTTTLGVNLKDCADKDLDLLKENIYNKITSYGGNLVETANKVSQKYGIPIVNKRISVTPIGLIMGSTLKGLSNEEAVDACVEVGITLDNIAKEVGVDFIGGYSALVQKRATPEEKMLIRSIPKLMTKTDRVCASVNVATTKAGINMYAVKKMGEIVKETSEITKDAIGCAKIVVFCNAPEDNPFMAGAFHGPGEGDAVINAGVSGPGVVRAVVEQLKGKDIGTVSDEIKKTAFKITRMGELVGKEVASELGVDFGIVDLSLAPTPAIGDSIANILEAVGLERCGTHGTTAALAMLNDAVKKGGAMASSNVGGLSGAFIPVSEDAGMIEAVEVGALRLEKLEAMTCVCSVGLDMIAVPGKTPASTLSAIIADEMAIGMINKKTTAVRIIPVPGKDVGDSVEYGGLLGTAPIMPVSEFSSEELIERGGRIPAPIQSLTN.

The protein belongs to the UPF0210 family.

In Methanococcus maripaludis (strain C5 / ATCC BAA-1333), this protein is UPF0210 protein MmarC5_0151.